Consider the following 586-residue polypeptide: DNA-directed RNA polymerase subunit beta' (586 aa).

Zn(2+)-binding residues include Cys-64, Cys-66, Cys-85, and Cys-88. The Mg(2+) site is built by Asp-448, Asp-450, and Asp-452.

This sequence belongs to the RNA polymerase beta' chain family. RpoC1 subfamily. In plastids the minimal PEP RNA polymerase catalytic core is composed of four subunits: alpha, beta, beta', and beta''. When a (nuclear-encoded) sigma factor is associated with the core the holoenzyme is formed, which can initiate transcription. Requires Mg(2+) as cofactor. Zn(2+) is required as a cofactor.

It is found in the plastid. Its subcellular location is the chloroplast. The catalysed reaction is RNA(n) + a ribonucleoside 5'-triphosphate = RNA(n+1) + diphosphate. Functionally, DNA-dependent RNA polymerase catalyzes the transcription of DNA into RNA using the four ribonucleoside triphosphates as substrates. The polypeptide is DNA-directed RNA polymerase subunit beta' (Euglena gracilis).